Reading from the N-terminus, the 372-residue chain is MADS-box transcription factor pvg4 (372 aa).

The region spanning 1–61 is the MADS-box domain; that stretch reads MGRKKISIAP…GRLHVFCSSD (61 aa). Residues 81–187 form a disordered region; the sequence is SHFSSSPVEE…HPPHPHFHNN (107 aa). Low complexity predominate over residues 84-100; sequence SSSPVEESSTVSPETTT. Residues 114 to 145 are compositionally biased toward polar residues; it reads QDQPLSDSQLDTGDSPATSETTVQDYNPQVQS. Residues 167–184 are compositionally biased toward basic residues; it reads QHHHPHTRPPHHPPHPHF.

It localises to the nucleus. In terms of biological role, acts in transcription regulation. May bind to a MEF2-like typee II promoter sequence. In Schizosaccharomyces pombe (strain 972 / ATCC 24843) (Fission yeast), this protein is MADS-box transcription factor pvg4 (pvg4).